A 458-amino-acid polypeptide reads, in one-letter code: Alpha-2C adrenergic receptor (458 aa).

The Extracellular segment spans residues 1–51 (MASPALAAALAAAAAEGPNGSDAGEWGSGGGANASGTDWGPPPGQYSAGAV). N-linked (GlcNAc...) asparagine glycans are attached at residues N19 and N33. A helical membrane pass occupies residues 52 to 76 (AGLAAVVGFLIVFTVVGNVLVVIAV). The Cytoplasmic portion of the chain corresponds to 77 to 88 (LTSRALRAPQNL). A helical transmembrane segment spans residues 89 to 114 (FLVSLASADILVATLVMPFSLANELM). Residues 115-124 (AYWYFGQVWC) lie on the Extracellular side of the membrane. The cysteines at positions 124 and 202 are disulfide-linked. The helical transmembrane segment at 125–147 (GVYLALDVLFCTSSIVHLCAISL) threads the bilayer. The Cytoplasmic segment spans residues 148–168 (DRYWSVTQAVEYNLKRTPRRV). A helical membrane pass occupies residues 169–191 (KATIVAVWLISAVISFPPLVSFY). At 192–207 (RRPDGAAYPQCGLNDE) the chain is on the extracellular side. The helical transmembrane segment at 208–231 (TWYILSSCIGSFFAPCLIMGLVYA) threads the bilayer. At 232 to 379 (RIYRVAKLRT…QAREKRFTFV (148 aa)) the chain is on the cytoplasmic side. A disordered region spans residues 245–343 (SEKRGPAGPD…SPGPGGRLSR (99 aa)). A compositionally biased stretch (basic residues) spans 291 to 303 (RRRRRGALRRGGR). The helical transmembrane segment at 380–403 (LAVVMGVFVLCWFPFFFSYSLYGI) threads the bilayer. At 404–416 (CREACQLPEPLFK) the chain is on the extracellular side. Residues 417-437 (FFFWIGYCNSSLNPVIYTVFN) form a helical membrane-spanning segment. Over 438–458 (QDFRRSFKHILFRRRRRGFRQ) the chain is Cytoplasmic.

It belongs to the G-protein coupled receptor 1 family. Adrenergic receptor subfamily. ADRA2C sub-subfamily.

It localises to the cell membrane. Functionally, alpha-2 adrenergic receptors mediate the catecholamine-induced inhibition of adenylate cyclase through the action of G proteins. This chain is Alpha-2C adrenergic receptor (Adra2c), found in Rattus norvegicus (Rat).